Consider the following 238-residue polypeptide: Large ribosomal subunit protein uL1 (238 aa).

This sequence belongs to the universal ribosomal protein uL1 family. As to quaternary structure, part of the 50S ribosomal subunit.

Functionally, binds directly to 23S rRNA. The L1 stalk is quite mobile in the ribosome, and is involved in E site tRNA release. In terms of biological role, protein L1 is also a translational repressor protein, it controls the translation of the L11 operon by binding to its mRNA. This Frankia casuarinae (strain DSM 45818 / CECT 9043 / HFP020203 / CcI3) protein is Large ribosomal subunit protein uL1.